A 204-amino-acid polypeptide reads, in one-letter code: Ras-related protein RabL (204 aa).

14 to 21 (GDSNVGKT) serves as a coordination point for GTP. Positions 36–44 (RPPSIGPDY) match the Effector region motif. GTP-binding positions include 62–66 (DTCGQ) and 120–123 (TKSD). S-geranylgeranyl cysteine attachment occurs at residues cysteine 203 and cysteine 204.

It belongs to the small GTPase superfamily. Rab family.

The protein localises to the cell membrane. The protein is Ras-related protein RabL (rabL) of Dictyostelium discoideum (Social amoeba).